A 508-amino-acid chain; its full sequence is Bifunctional purine biosynthesis protein PurH (508 aa).

The region spanning 1-144 is the MGS-like domain; sequence MTRALLSVSD…KNFAGVLPIV (144 aa).

This sequence belongs to the PurH family.

The catalysed reaction is (6R)-10-formyltetrahydrofolate + 5-amino-1-(5-phospho-beta-D-ribosyl)imidazole-4-carboxamide = 5-formamido-1-(5-phospho-D-ribosyl)imidazole-4-carboxamide + (6S)-5,6,7,8-tetrahydrofolate. It carries out the reaction IMP + H2O = 5-formamido-1-(5-phospho-D-ribosyl)imidazole-4-carboxamide. It participates in purine metabolism; IMP biosynthesis via de novo pathway; 5-formamido-1-(5-phospho-D-ribosyl)imidazole-4-carboxamide from 5-amino-1-(5-phospho-D-ribosyl)imidazole-4-carboxamide (10-formyl THF route): step 1/1. Its pathway is purine metabolism; IMP biosynthesis via de novo pathway; IMP from 5-formamido-1-(5-phospho-D-ribosyl)imidazole-4-carboxamide: step 1/1. In Leuconostoc citreum (strain KM20), this protein is Bifunctional purine biosynthesis protein PurH.